We begin with the raw amino-acid sequence, 171 residues long: Non-specific lipid transfer protein GPI-anchored 19 (171 aa).

The signal sequence occupies residues 1-18 (MILAILALVIATFLYGGA). Disulfide bonds link C25-C66, C35-C50, C51-C93, and C64-C103. Residues N72 and N82 are each glycosylated (N-linked (GlcNAc...) asparagine). The interval 113 to 149 (LPANTPVGSPRSAPSPSGTTSPANTPSGSKKFPLSNE) is disordered. Residues 118–141 (PVGSPRSAPSPSGTTSPANTPSGS) show a composition bias toward low complexity. S147 carries the GPI-anchor amidated serine lipid modification. N148 carries N-linked (GlcNAc...) asparagine glycosylation. Positions 148-171 (NESSSKSNVIILSFVSIALVLAII) are cleaved as a propeptide — removed in mature form.

This sequence belongs to the plant LTP family.

Its subcellular location is the cell membrane. In terms of biological role, probable lipid transfer protein. The protein is Non-specific lipid transfer protein GPI-anchored 19 of Arabidopsis thaliana (Mouse-ear cress).